We begin with the raw amino-acid sequence, 337 residues long: Cholinesterase 2 (337 aa).

Ser99 acts as the Acyl-ester intermediate in catalysis. Residues Cys153 and Cys165 are joined by a disulfide bond. Catalysis depends on Glu224, which acts as the Charge relay system. Asn290 carries N-linked (GlcNAc...) asparagine glycosylation.

It belongs to the type-B carboxylesterase/lipase family.

The enzyme catalyses an acylcholine + H2O = a carboxylate + choline + H(+). The chain is Cholinesterase 2 (CHE2) from Branchiostoma lanceolatum (Common lancelet).